The sequence spans 1085 residues: Ubiquitin carboxyl-terminal hydrolase 36 (1085 aa).

Low complexity predominate over residues Gly23–Ala36. Disordered stretches follow at residues Gly23 to Gln47 and Lys104 to Lys149. Residues Thr173–Asp481 enclose the USP domain. Cys182 serves as the catalytic Nucleophile. The active-site Proton acceptor is the His440. Disordered regions lie at residues Ala489–Lys730, Lys745–Lys888, Glu963–Gln1030, and Lys1043–Ser1085. Residues Ser503 to Thr518 are compositionally biased toward low complexity. Phosphoserine is present on residues Ser514 and Ser516. A compositionally biased stretch (polar residues) spans Gly532–Ala542. Over residues Asn588–Asn609 the composition is skewed to low complexity. A compositionally biased stretch (basic and acidic residues) spans Met642 to Lys651. 2 positions are modified to phosphothreonine: Thr660 and Thr664. Ser674 and Ser676 each carry phosphoserine. Polar residues predominate over residues Thr705 to Lys730. Phosphoserine is present on Ser749. Residues Ser749–Ser758 are compositionally biased toward acidic residues. The segment covering Pro768–Ala778 has biased composition (low complexity). Residues Pro779–Pro788 show a composition bias toward pro residues. Ser781 is modified (phosphoserine). Thr784 carries the post-translational modification Phosphothreonine. Ser787 is modified (phosphoserine). Positions Glu805–Glu818 are enriched in acidic residues. A compositionally biased stretch (polar residues) spans Lys822–Pro844. The residue at position 825 (Thr825) is a Phosphothreonine. Ser843 bears the Phosphoserine mark. Thr846 carries the post-translational modification Phosphothreonine. The span at Pro859–Asn884 shows a compositional bias: polar residues. 2 stretches are compositionally biased toward low complexity: residues Ser987–Ser998 and Gln1056–Ala1066.

Belongs to the peptidase C19 family. As to quaternary structure, interacts with atms/PAF1, but not with CycT.

The protein localises to the nucleus. Its subcellular location is the nucleolus. The catalysed reaction is Thiol-dependent hydrolysis of ester, thioester, amide, peptide and isopeptide bonds formed by the C-terminal Gly of ubiquitin (a 76-residue protein attached to proteins as an intracellular targeting signal).. Functionally, required for maintaining multiple types of adult stem cells, including male and female germline, epithelial follicle cell and intestinal stem cells. May function as a transcriptional repressor by continually deubiquiting histone H2B at the promoters of genes critical for cellular differentiation, thereby preventing histone H3 'Lys-4' trimethylation (H3K4). Controls selective autophagy activation by ubiquitinated proteins. In Drosophila erecta (Fruit fly), this protein is Ubiquitin carboxyl-terminal hydrolase 36 (Usp36).